Reading from the N-terminus, the 160-residue chain is Anaerobic nitrite reductase AHB1 (160 aa).

One can recognise a Globin domain in the interval 8 to 157 (VFTEEQEALV…LVAAIKAEMN (150 aa)). Positions 41-45 (EIAPT) match the Homodimerization motif. Residues Ser51, Lys65, His69, Arg99, Ser103, and His104 each coordinate heme b. Positions 111 to 123 (DEHFEVAKYALLE) match the Homodimerization motif.

Belongs to the plant globin family. In terms of assembly, homodimer. Heme b serves as cofactor. In terms of tissue distribution, expressed in roots and rosette leaves.

It localises to the cytoplasm. It is found in the nucleus. The catalysed reaction is Fe(III)-heme b-[protein] + nitric oxide + H2O = Fe(II)-heme b-[protein] + nitrite + 2 H(+). Phytoglobin that reduces nitrite to nitric oxide (NO) under anoxic conditions (e.g. during flooding or in waterlogged soil). May not function as an oxygen storage or transport protein. Has an unusually high affinity for O(2) through an hexacoordinate heme iron because of a very low dissociation constant. The sequence is that of Anaerobic nitrite reductase AHB1 from Arabidopsis thaliana (Mouse-ear cress).